The following is a 342-amino-acid chain: Dihydroorotase (342 aa).

Zn(2+)-binding residues include His13 and His15. Residues His15–Arg17 and Asn41 contribute to the substrate site. Zn(2+)-binding residues include Lys98, His135, and His173. Lys98 carries the post-translational modification N6-carboxylysine. Residue His135 participates in substrate binding. Residue Leu218 coordinates substrate. Residue Asp246 coordinates Zn(2+). Asp246 is an active-site residue. Positions 250 and 262 each coordinate substrate.

Belongs to the metallo-dependent hydrolases superfamily. DHOase family. Class II DHOase subfamily. In terms of assembly, homodimer. Requires Zn(2+) as cofactor.

It catalyses the reaction (S)-dihydroorotate + H2O = N-carbamoyl-L-aspartate + H(+). The protein operates within pyrimidine metabolism; UMP biosynthesis via de novo pathway; (S)-dihydroorotate from bicarbonate: step 3/3. Catalyzes the reversible cyclization of carbamoyl aspartate to dihydroorotate. This chain is Dihydroorotase, found in Vibrio campbellii (strain ATCC BAA-1116).